A 386-amino-acid polypeptide reads, in one-letter code: S-adenosylmethionine synthase (386 aa).

ATP is bound at residue histidine 16. Residue aspartate 18 participates in Mg(2+) binding. Glutamate 44 is a K(+) binding site. Positions 57 and 100 each coordinate L-methionine. The segment at 100 to 110 (QSSDIAQGVDR) is flexible loop. ATP-binding positions include 165–167 (DAK), aspartate 240, 246–247 (RK), alanine 263, and lysine 267. Aspartate 240 provides a ligand contact to L-methionine. Lysine 271 is a binding site for L-methionine.

This sequence belongs to the AdoMet synthase family. As to quaternary structure, homotetramer; dimer of dimers. Mg(2+) serves as cofactor. Requires K(+) as cofactor.

Its subcellular location is the cytoplasm. It carries out the reaction L-methionine + ATP + H2O = S-adenosyl-L-methionine + phosphate + diphosphate. Its pathway is amino-acid biosynthesis; S-adenosyl-L-methionine biosynthesis; S-adenosyl-L-methionine from L-methionine: step 1/1. Its function is as follows. Catalyzes the formation of S-adenosylmethionine (AdoMet) from methionine and ATP. The overall synthetic reaction is composed of two sequential steps, AdoMet formation and the subsequent tripolyphosphate hydrolysis which occurs prior to release of AdoMet from the enzyme. The chain is S-adenosylmethionine synthase from Francisella philomiragia subsp. philomiragia (strain ATCC 25017 / CCUG 19701 / FSC 153 / O#319-036).